Consider the following 325-residue polypeptide: Melanocortin receptor 5 (325 aa).

Over 1–37 (MNSSFHLHFLDLNLNATEGNLSGPNVKNKSSPCEDMG) the chain is Extracellular. 4 N-linked (GlcNAc...) asparagine glycosylation sites follow: Asn-2, Asn-15, Asn-20, and Asn-28. The chain crosses the membrane as a helical span at residues 38–61 (IAVEVFLTLGVISLLENILVIGAI). Residues 62–73 (VKNKNLHSPMYF) lie on the Cytoplasmic side of the membrane. A helical transmembrane segment spans residues 74 to 97 (FVCSLAVADMLVSMSSAWETITIY). Residues 98–114 (LLNNKHLVIADAFVRHI) are Extracellular-facing. Residues 115–138 (DNVFDSMICISVVASMCSLLAIAV) traverse the membrane as a helical segment. The Cytoplasmic portion of the chain corresponds to 139–155 (DRYVTIFYALRYHHIMT). A helical transmembrane segment spans residues 156 to 179 (ARRSGAIIAGIWAFCTGCGIVFIL). Topologically, residues 180-186 (YSESTYV) are extracellular. Residues 187 to 211 (ILCLISMFFAMLFLLVSLYIHMFLL) traverse the membrane as a helical segment. Residues 212 to 239 (ARTHVKRIAALPRASSARQRTSMQGAVT) lie on the Cytoplasmic side of the membrane. A helical transmembrane segment spans residues 240–265 (VTMLLGVFTVCWAPFFLHLTLMLSCP). Topologically, residues 266-273 (QNLYCSCF) are extracellular. A helical membrane pass occupies residues 274-297 (MSHFNMYLILIMCNSVMDPLIYAF). Residues 298 to 325 (RSQEMRKTFKEIICCRGFRIACSFPRRD) lie on the Cytoplasmic side of the membrane. Residues Cys-311 and Cys-312 are each lipidated (S-palmitoyl cysteine).

The protein belongs to the G-protein coupled receptor 1 family.

The protein localises to the cell membrane. In terms of biological role, receptor for MSH (alpha, beta and gamma) and ACTH. The activity of this receptor is mediated by G proteins which activate adenylate cyclase. This receptor is a possible mediator of the immunomodulation properties of melanocortins. The polypeptide is Melanocortin receptor 5 (MC5R) (Pan troglodytes (Chimpanzee)).